Reading from the N-terminus, the 545-residue chain is Chaperonin GroEL 1 (545 aa).

Residues 30–33 (TLGP), lysine 51, 87–91 (DGTTT), glycine 415, and aspartate 496 each bind ATP.

This sequence belongs to the chaperonin (HSP60) family. In terms of assembly, forms a cylinder of 14 subunits composed of two heptameric rings stacked back-to-back. Interacts with the co-chaperonin GroES.

Its subcellular location is the cytoplasm. The catalysed reaction is ATP + H2O + a folded polypeptide = ADP + phosphate + an unfolded polypeptide.. In terms of biological role, together with its co-chaperonin GroES, plays an essential role in assisting protein folding. The GroEL-GroES system forms a nano-cage that allows encapsulation of the non-native substrate proteins and provides a physical environment optimized to promote and accelerate protein folding. The polypeptide is Chaperonin GroEL 1 (Nitrobacter hamburgensis (strain DSM 10229 / NCIMB 13809 / X14)).